The following is an 831-amino-acid chain: MAIQKKHGKGRLDKWYKLAKEKGYRARAAFKLIQLNKKYGFLEKSKVALDLCAAPGSWCQVCAETMPTNSIIIGVDLAPIKPIPKVITFQSDITTEKCRATIRSHLKTWKADVVLHDGAPNVGTAWVQDSYNQAELALHSLKLATEFLIEGGTFVTKVFRSKDYNSLLWVCNQLFAKVEATKPPSSRNVSAEIFVVCRGFKAPKRIDPKLLDPRSVFEDVAGPAPNNEAKVYNPEVKKRKREGYEEGDYTQFKEISASEFINTVDPIAILGQYNKLSFEQPKNGDVALAALDKLPETTEEIRLCCADLKVLGRKEFKLLLKWRLKVREIFGFPSKKTQKAAVDEEVAVVENMDEELRIQEELQRIKEKETSKKKRERRRENEKKQKEIVRMQMNMTAPMDIGVEQEGPRGEGAMFRLKTIDQNAALNKIAKGKMAVIKETEKPKDYDFGSDGETDESDEEADRLEEELDNLYDQYRERKAAADAKYRAKKARKENGDDEWEGVSGDEEKGSDDDDDEELEVDSSDDDSDSEDGESGKKLITDLDGQPEEKDGLSKRAKNFFSQGIFAEIPGLLEEPESEEEEAQEAELVEAVEDLKVTKKEKKEAKETKAKSKKAAEESDDDDDFEVVKNNEDDDWENVEKKKKNGRPDIDIITAEAMTLAHQLATGEKTSYDVIDDGYTKHAFKDRDGLPDWFLDDESKHDKPHKPITKAAAQAIKEKLRAYNARPIKKVAEAKARKKFKQAQRLEKLKKKADMLAGDDGMSEKEKAASISKLMASVAKKTRRAPIKVVKAAGSNKGLQGRPKGVKGRYKMVDPRMKKELRAMKRISKKK.

S-adenosyl-L-methionine is bound by residues glycine 56, tryptophan 58, aspartate 76, aspartate 92, and aspartate 117. Residue lysine 157 is the Proton acceptor of the active site. A coiled-coil region spans residues 349 to 396 (VENMDEELRIQEELQRIKEKETSKKKRERRRENEKKQKEIVRMQMNMT). Disordered regions lie at residues 442–556 (KPKD…LSKR), 569–644 (IPGL…KKKK), and 790–816 (VKAA…VDPR). Positions 448–470 (FGSDGETDESDEEADRLEEELDN) are enriched in acidic residues. Basic and acidic residues predominate over residues 474–486 (QYRERKAAADAKY). The segment covering 496-533 (GDDEWEGVSGDEEKGSDDDDDEELEVDSSDDDSDSEDG) has biased composition (acidic residues). Basic and acidic residues predominate over residues 534–554 (ESGKKLITDLDGQPEEKDGLS). Positions 574 to 592 (EEPESEEEEAQEAELVEAV) are enriched in acidic residues. Residues 593–617 (EDLKVTKKEKKEAKETKAKSKKAAE) show a composition bias toward basic and acidic residues.

The protein belongs to the class I-like SAM-binding methyltransferase superfamily. RNA methyltransferase RlmE family. SPB1 subfamily. As to quaternary structure, component of the nucleolar and nucleoplasmic pre-60S ribosomal particle.

It localises to the nucleus. Its subcellular location is the nucleolus. The enzyme catalyses a ribonucleotide in rRNA + S-adenosyl-L-methionine = a 2'-O-methylribonucleotide in rRNA + S-adenosyl-L-homocysteine + H(+). Required for proper assembly of pre-ribosomal particles during the biogenesis of the 60S ribosomal subunit. This Neurospora crassa (strain ATCC 24698 / 74-OR23-1A / CBS 708.71 / DSM 1257 / FGSC 987) protein is AdoMet-dependent rRNA methyltransferase spb1 (spb1).